Reading from the N-terminus, the 91-residue chain is Proline, histidine and glycine-rich protein 1 (91 aa).

Positions 1–91 (MHPGGKGHCG…HCGPHPGPHH (91 aa)) are disordered. Gly residues-rich tracts occupy residues 33–42 (HPGHGPGHCP), 49–63 (GHGGPSHGHGPGHCP), and 70–82 (GHGGPSHGHGPGH).

In Mus musculus (Mouse), this protein is Proline, histidine and glycine-rich protein 1 (Phgr1).